The primary structure comprises 342 residues: Holliday junction branch migration complex subunit RuvB (342 aa).

Positions 1–181 are large ATPase domain (RuvB-L); that stretch reads MENRMVTPFD…FGMLCAMEFY (181 aa). ATP is bound by residues Leu20, Arg21, Gly62, Lys65, Thr66, Thr67, 128–130, Arg171, Tyr181, and Arg218; that span reads EDY. Thr66 lines the Mg(2+) pocket. The tract at residues 182–252 is small ATPAse domain (RuvB-S); sequence TDEELMEIVV…GAKAALDLLE (71 aa). The head domain (RuvB-H) stretch occupies residues 255–342; it reads KEGLDKIDNK…KDNQVSIFNK (88 aa). DNA is bound by residues Arg310 and Arg315.

This sequence belongs to the RuvB family. As to quaternary structure, homohexamer. Forms an RuvA(8)-RuvB(12)-Holliday junction (HJ) complex. HJ DNA is sandwiched between 2 RuvA tetramers; dsDNA enters through RuvA and exits via RuvB. An RuvB hexamer assembles on each DNA strand where it exits the tetramer. Each RuvB hexamer is contacted by two RuvA subunits (via domain III) on 2 adjacent RuvB subunits; this complex drives branch migration. In the full resolvosome a probable DNA-RuvA(4)-RuvB(12)-RuvC(2) complex forms which resolves the HJ.

The protein resides in the cytoplasm. It carries out the reaction ATP + H2O = ADP + phosphate + H(+). In terms of biological role, the RuvA-RuvB-RuvC complex processes Holliday junction (HJ) DNA during genetic recombination and DNA repair, while the RuvA-RuvB complex plays an important role in the rescue of blocked DNA replication forks via replication fork reversal (RFR). RuvA specifically binds to HJ cruciform DNA, conferring on it an open structure. The RuvB hexamer acts as an ATP-dependent pump, pulling dsDNA into and through the RuvAB complex. RuvB forms 2 homohexamers on either side of HJ DNA bound by 1 or 2 RuvA tetramers; 4 subunits per hexamer contact DNA at a time. Coordinated motions by a converter formed by DNA-disengaged RuvB subunits stimulates ATP hydrolysis and nucleotide exchange. Immobilization of the converter enables RuvB to convert the ATP-contained energy into a lever motion, pulling 2 nucleotides of DNA out of the RuvA tetramer per ATP hydrolyzed, thus driving DNA branch migration. The RuvB motors rotate together with the DNA substrate, which together with the progressing nucleotide cycle form the mechanistic basis for DNA recombination by continuous HJ branch migration. Branch migration allows RuvC to scan DNA until it finds its consensus sequence, where it cleaves and resolves cruciform DNA. In Clostridium botulinum (strain 657 / Type Ba4), this protein is Holliday junction branch migration complex subunit RuvB.